The following is a 197-amino-acid chain: C-type lectin domain family 3 member A (197 aa).

The N-terminal stretch at 1 to 22 (MAKNGLVICILVITLLLDQTTS) is a signal peptide. Disulfide bonds link Cys68/Cys78, Cys95/Cys191, and Cys167/Cys183. One can recognise a C-type lectin domain in the interval 74-192 (VHKKCYLASE…CRSSKRYICE (119 aa)).

As to expression, restricted to cartilage and breast. Also expressed in breast cancers.

It localises to the secreted. Functionally, promotes cell adhesion to laminin-332 and fibronectin. The polypeptide is C-type lectin domain family 3 member A (CLEC3A) (Homo sapiens (Human)).